A 123-amino-acid chain; its full sequence is Large ribosomal subunit protein uL14 (123 aa).

Belongs to the universal ribosomal protein uL14 family. Part of the 50S ribosomal subunit. Forms a cluster with proteins L3 and L19. In the 70S ribosome, L14 and L19 interact and together make contacts with the 16S rRNA in bridges B5 and B8.

In terms of biological role, binds to 23S rRNA. Forms part of two intersubunit bridges in the 70S ribosome. In Erwinia tasmaniensis (strain DSM 17950 / CFBP 7177 / CIP 109463 / NCPPB 4357 / Et1/99), this protein is Large ribosomal subunit protein uL14.